Here is a 195-residue protein sequence, read N- to C-terminus: Probable molybdenum cofactor guanylyltransferase (195 aa).

Residues 9 to 11, lysine 21, aspartate 69, and aspartate 100 contribute to the GTP site; that span reads LAG. Aspartate 100 serves as a coordination point for Mg(2+).

The protein belongs to the MobA family. Mg(2+) is required as a cofactor.

Its subcellular location is the cytoplasm. The catalysed reaction is Mo-molybdopterin + GTP + H(+) = Mo-molybdopterin guanine dinucleotide + diphosphate. In terms of biological role, transfers a GMP moiety from GTP to Mo-molybdopterin (Mo-MPT) cofactor (Moco or molybdenum cofactor) to form Mo-molybdopterin guanine dinucleotide (Mo-MGD) cofactor. This chain is Probable molybdenum cofactor guanylyltransferase, found in Geobacillus sp. (strain WCH70).